The primary structure comprises 184 residues: UPF0215 protein MJ1150 (184 aa).

The protein belongs to the UPF0215 family.

This is UPF0215 protein MJ1150 from Methanocaldococcus jannaschii (strain ATCC 43067 / DSM 2661 / JAL-1 / JCM 10045 / NBRC 100440) (Methanococcus jannaschii).